Consider the following 116-residue polypeptide: Large ribosomal subunit protein bL17 (116 aa).

The protein belongs to the bacterial ribosomal protein bL17 family. Part of the 50S ribosomal subunit. Contacts protein L32.

The polypeptide is Large ribosomal subunit protein bL17 (Deinococcus geothermalis (strain DSM 11300 / CIP 105573 / AG-3a)).